The primary structure comprises 275 residues: Large ribosomal subunit protein uL2 (275 aa).

2 disordered regions span residues 24–54 (LYKG…VRHQ) and 223–275 (VAMN…RHKR). Composition is skewed to basic and acidic residues over residues 25-38 (YKGR…EKKT) and 229-241 (DHPH…RTGE).

It belongs to the universal ribosomal protein uL2 family. In terms of assembly, part of the 50S ribosomal subunit. Forms a bridge to the 30S subunit in the 70S ribosome.

Functionally, one of the primary rRNA binding proteins. Required for association of the 30S and 50S subunits to form the 70S ribosome, for tRNA binding and peptide bond formation. It has been suggested to have peptidyltransferase activity; this is somewhat controversial. Makes several contacts with the 16S rRNA in the 70S ribosome. In Azoarcus sp. (strain BH72), this protein is Large ribosomal subunit protein uL2.